The primary structure comprises 476 residues: Argininosuccinate lyase (476 aa).

Belongs to the lyase 1 family. Argininosuccinate lyase subfamily.

The protein localises to the cytoplasm. The enzyme catalyses 2-(N(omega)-L-arginino)succinate = fumarate + L-arginine. The protein operates within amino-acid biosynthesis; L-arginine biosynthesis; L-arginine from L-ornithine and carbamoyl phosphate: step 3/3. This Leptothrix cholodnii (strain ATCC 51168 / LMG 8142 / SP-6) (Leptothrix discophora (strain SP-6)) protein is Argininosuccinate lyase.